A 60-amino-acid polypeptide reads, in one-letter code: Metallothionein (60 aa).

Position 1 is an N-acetylmethionine (M1). Residues 1–28 (MDPCECSKTGTCNCGGSCTCKNCSCTTC) form a beta region. Residues C4, C6, C12, C14, C18, C20, C23, C25, C28, C32, C33, C35, C36, C40, C43, C47, C49, C54, C58, and C59 each contribute to the a divalent metal cation site. The interval 29-60 (NKSCCPCCPSGCPKCASGCVCKGKTCDTSCCQ) is alpha.

It belongs to the metallothionein superfamily. Type 1 family.

In terms of biological role, metallothioneins have a high content of cysteine residues that bind various heavy metals. The chain is Metallothionein (mt) from Pleuronectes platessa (European plaice).